Reading from the N-terminus, the 215-residue chain is Phosphatidylserine decarboxylase proenzyme (215 aa).

S184 acts as the Schiff-base intermediate with substrate; via pyruvic acid in catalysis. Position 184 is a pyruvic acid (Ser); by autocatalysis (S184).

The protein belongs to the phosphatidylserine decarboxylase family. PSD-A subfamily. As to quaternary structure, heterodimer of a large membrane-associated beta subunit and a small pyruvoyl-containing alpha subunit. Requires pyruvate as cofactor. In terms of processing, is synthesized initially as an inactive proenzyme. Formation of the active enzyme involves a self-maturation process in which the active site pyruvoyl group is generated from an internal serine residue via an autocatalytic post-translational modification. Two non-identical subunits are generated from the proenzyme in this reaction, and the pyruvate is formed at the N-terminus of the alpha chain, which is derived from the carboxyl end of the proenzyme. The post-translation cleavage follows an unusual pathway, termed non-hydrolytic serinolysis, in which the side chain hydroxyl group of the serine supplies its oxygen atom to form the C-terminus of the beta chain, while the remainder of the serine residue undergoes an oxidative deamination to produce ammonia and the pyruvoyl prosthetic group on the alpha chain.

The protein localises to the cell membrane. It catalyses the reaction a 1,2-diacyl-sn-glycero-3-phospho-L-serine + H(+) = a 1,2-diacyl-sn-glycero-3-phosphoethanolamine + CO2. The protein operates within phospholipid metabolism; phosphatidylethanolamine biosynthesis; phosphatidylethanolamine from CDP-diacylglycerol: step 2/2. In terms of biological role, catalyzes the formation of phosphatidylethanolamine (PtdEtn) from phosphatidylserine (PtdSer). This is Phosphatidylserine decarboxylase proenzyme from Ralstonia nicotianae (strain ATCC BAA-1114 / GMI1000) (Ralstonia solanacearum).